A 407-amino-acid chain; its full sequence is Acetate kinase (407 aa).

Asn-10 is a binding site for Mg(2+). An ATP-binding site is contributed by Lys-17. Substrate is bound at residue Arg-91. The active-site Proton donor/acceptor is Asp-150. ATP contacts are provided by residues 210–214 (HLGNG), 285–287 (DCR), and 338–342 (GIGEN). Glu-392 serves as a coordination point for Mg(2+).

Belongs to the acetokinase family. Homodimer. It depends on Mg(2+) as a cofactor. Mn(2+) is required as a cofactor.

Its subcellular location is the cytoplasm. The catalysed reaction is acetate + ATP = acetyl phosphate + ADP. The protein operates within metabolic intermediate biosynthesis; acetyl-CoA biosynthesis; acetyl-CoA from acetate: step 1/2. Functionally, catalyzes the formation of acetyl phosphate from acetate and ATP. Can also catalyze the reverse reaction. The protein is Acetate kinase of Mannheimia succiniciproducens (strain KCTC 0769BP / MBEL55E).